A 136-amino-acid polypeptide reads, in one-letter code: Inner membrane protein YbhQ (136 aa).

The Cytoplasmic portion of the chain corresponds to 1–12 (MKWQQRVRVATG). Residues 13 to 33 (LSCWQIMLHLLVVALLVVGWM) traverse the membrane as a helical segment. Topologically, residues 34 to 37 (SKTL) are periplasmic. Residues 38 to 58 (VHVGVGLCALYCVTVVMMLVF) form a helical membrane-spanning segment. At 59–71 (QRHPEQRWREVAD) the chain is on the cytoplasmic side. A helical transmembrane segment spans residues 72-92 (VLEELTTTWYFGAALIVLWLL). The Periplasmic segment spans residues 93–99 (SRVLENN). The chain crosses the membrane as a helical span at residues 100–120 (FLLAIAGLAILAGPAVVSLLA). The Cytoplasmic segment spans residues 121–136 (KDKKLHHLTSKHRVRR).

The protein localises to the cell inner membrane. This Escherichia coli O157:H7 protein is Inner membrane protein YbhQ (ybhQ).